Reading from the N-terminus, the 631-residue chain is Plastidic ATP/ADP-transporter (631 aa).

The next 11 membrane-spanning stretches (helical) occupy residues 106-126, 149-169, 180-200, 238-258, 271-290, 313-333, 369-389, 407-427, 442-462, 465-485, and 543-563; these read IELV…CILF, IIPF…MLLY, ALFY…GFVL, LFYV…FWGF, FYPL…GRTV, GMMS…WWVN, LATL…TWKS, DFST…QWIF, VLLL…PLAP, AKFG…QNIF, and LASS…AWLG. The segment at 586-631 is disordered; it reads ERASLKIPVVSQNENGNGPLSSESSLNPAGGDSTNASSEPSSPRSL. The segment covering 595-631 has biased composition (polar residues); that stretch reads VSQNENGNGPLSSESSLNPAGGDSTNASSEPSSPRSL.

It belongs to the ADP/ATP translocase tlc (TC 2.A.12.2) family.

It localises to the plastid. The protein localises to the chloroplast membrane. The sequence is that of Plastidic ATP/ADP-transporter from Solanum tuberosum (Potato).